The following is a 524-amino-acid chain: GMP synthase [glutamine-hydrolyzing] (524 aa).

The Glutamine amidotransferase type-1 domain occupies 9 to 207 (RILILDFSSQ…VIHICQCIPN (199 aa)). Residue Cys-86 is the Nucleophile of the active site. Catalysis depends on residues His-181 and Glu-183. A GMPS ATP-PPase domain is found at 208 to 399 (WTTKHIIEDS…LGLPADLIYR (192 aa)). Position 235–241 (235–241 (SGGVDSA)) interacts with ATP.

Homodimer.

The enzyme catalyses XMP + L-glutamine + ATP + H2O = GMP + L-glutamate + AMP + diphosphate + 2 H(+). It participates in purine metabolism; GMP biosynthesis; GMP from XMP (L-Gln route): step 1/1. Catalyzes the synthesis of GMP from XMP. The chain is GMP synthase [glutamine-hydrolyzing] from Coxiella burnetii (strain Dugway 5J108-111).